Consider the following 147-residue polypeptide: Large ribosomal subunit protein uL13 (147 aa).

The protein belongs to the universal ribosomal protein uL13 family. Part of the 50S ribosomal subunit.

Functionally, this protein is one of the early assembly proteins of the 50S ribosomal subunit, although it is not seen to bind rRNA by itself. It is important during the early stages of 50S assembly. The protein is Large ribosomal subunit protein uL13 of Lactobacillus acidophilus (strain ATCC 700396 / NCK56 / N2 / NCFM).